The following is a 163-amino-acid chain: Probable ribosome biogenesis protein RLP24 (163 aa).

Belongs to the eukaryotic ribosomal protein eL24 family. Associated with nucleolar and cytoplasmic pre-60S particles. At the end of biogenesis it dissociates from cytoplasmic pre-60S particles and is likely to be exchanged for its ribosomal homolog, RPL24.

Its subcellular location is the nucleus. The protein resides in the nucleolus. In terms of biological role, involved in the biogenesis of the 60S ribosomal subunit. Ensures the docking of GTPBP4/NOG1 to pre-60S particles. The chain is Probable ribosome biogenesis protein RLP24 (RSL24D1) from Homo sapiens (Human).